Here is a 380-residue protein sequence, read N- to C-terminus: Cytochrome b (380 aa).

Transmembrane regions (helical) follow at residues 34–54 (FGSL…LLAM), 78–99 (WLIR…FLHI), 114–134 (WNTG…GYVL), and 179–199 (FFAL…IHLT). Heme b-binding residues include His-84 and His-98. Heme b is bound by residues His-183 and His-197. Residue His-202 participates in a ubiquinone binding. A run of 4 helical transmembrane segments spans residues 227 to 247 (LKDI…ALFS), 289 to 309 (LGGV…PFLH), 321 to 341 (LSQI…WIGS), and 348 to 368 (FIII…ILFP).

The protein belongs to the cytochrome b family. As to quaternary structure, the cytochrome bc1 complex contains 11 subunits: 3 respiratory subunits (MT-CYB, CYC1 and UQCRFS1), 2 core proteins (UQCRC1 and UQCRC2) and 6 low-molecular weight proteins (UQCRH/QCR6, UQCRB/QCR7, UQCRQ/QCR8, UQCR10/QCR9, UQCR11/QCR10 and a cleavage product of UQCRFS1). This cytochrome bc1 complex then forms a dimer. Heme b serves as cofactor.

It localises to the mitochondrion inner membrane. Functionally, component of the ubiquinol-cytochrome c reductase complex (complex III or cytochrome b-c1 complex) that is part of the mitochondrial respiratory chain. The b-c1 complex mediates electron transfer from ubiquinol to cytochrome c. Contributes to the generation of a proton gradient across the mitochondrial membrane that is then used for ATP synthesis. This is Cytochrome b (MT-CYB) from Polyplectron bicalcaratum (Grey peacock-pheasant).